Here is a 256-residue protein sequence, read N- to C-terminus: Protein FixA (256 aa).

The protein belongs to the ETF beta-subunit/FixA family. As to quaternary structure, heterodimer of FixA and FixB.

It participates in amine and polyamine metabolism; carnitine metabolism. Its function is as follows. Required for anaerobic carnitine reduction. May bring reductant to CaiA. The sequence is that of Protein FixA from Escherichia coli O81 (strain ED1a).